The primary structure comprises 184 residues: MINGTDFSFSLGYWPPAGGFGLNTNILGTNLINLSVVLGVLIYFGKGVLSNLLDDRKQKILSTIRDSEELYKGATDQLEKARARLREVEMRADEIQVNGYSQIEREKEDLINAAHENLERLEDSKNETVNFEQQRAIDQVRQQISRQALRRALGTLNSRLNNELHLRTIDHNISMLRAMKNTTD.

A helical transmembrane segment spans residues 31 to 53 (LINLSVVLGVLIYFGKGVLSNLL).

This sequence belongs to the ATPase B chain family. In terms of assembly, F-type ATPases have 2 components, F(1) - the catalytic core - and F(0) - the membrane proton channel. F(1) has five subunits: alpha(3), beta(3), gamma(1), delta(1), epsilon(1). F(0) has four main subunits: a(1), b(1), b'(1) and c(10-14). The alpha and beta chains form an alternating ring which encloses part of the gamma chain. F(1) is attached to F(0) by a central stalk formed by the gamma and epsilon chains, while a peripheral stalk is formed by the delta, b and b' chains.

It is found in the plastid. The protein localises to the chloroplast thylakoid membrane. Its function is as follows. F(1)F(0) ATP synthase produces ATP from ADP in the presence of a proton or sodium gradient. F-type ATPases consist of two structural domains, F(1) containing the extramembraneous catalytic core and F(0) containing the membrane proton channel, linked together by a central stalk and a peripheral stalk. During catalysis, ATP synthesis in the catalytic domain of F(1) is coupled via a rotary mechanism of the central stalk subunits to proton translocation. In terms of biological role, component of the F(0) channel, it forms part of the peripheral stalk, linking F(1) to F(0). This chain is ATP synthase subunit b, chloroplastic, found in Cycas taitungensis (Prince sago).